Reading from the N-terminus, the 289-residue chain is MPTEDRVCFTWEEYARHVREYWRGVAESDGFDSEDIRSPVVLTGLFHYDCQSGRHYPEPLLGTSFELAALLKFNKTMNLTSSYYITLLAHDPSLEKTFQVRVDEREYGSLDLTVAIARPKKDQNEVSDGVFQGPLPDWPSEDALRHDRNRFYELEISEWQATDWISLYLKLLILATDRGMFVQTGLPQVQILEVVIETEEENEKPPDKRLNARRAHVYITFTGLPKSPRLVEIGEHVERKAIIRRVIDASGYLTLLGKFWSGKDTDQQRSMTLPSGEQAESSKKRPRLS.

Residues 266 to 289 are disordered; that stretch reads DQQRSMTLPSGEQAESSKKRPRLS. Polar residues predominate over residues 268–279; the sequence is QRSMTLPSGEQA.

It belongs to the UPF0725 (EMB2204) family.

The sequence is that of UPF0725 protein At1g27860 from Arabidopsis thaliana (Mouse-ear cress).